We begin with the raw amino-acid sequence, 101 residues long: MAKKAMIEREKKRQKLVAKYAAKRAALKEIANDDSKPMEERFKARLKLAELPRNSSATRLHNRCQLTGRPHAYYRKLKISRIALRDLGSAGQIPGLVKSSW.

It belongs to the universal ribosomal protein uS14 family. Part of the 30S ribosomal subunit. Contacts proteins S3 and S10.

In terms of biological role, binds 16S rRNA, required for the assembly of 30S particles and may also be responsible for determining the conformation of the 16S rRNA at the A site. This is Small ribosomal subunit protein uS14 from Dinoroseobacter shibae (strain DSM 16493 / NCIMB 14021 / DFL 12).